Consider the following 114-residue polypeptide: UPF0102 protein HPAG1_0809 (114 aa).

It belongs to the UPF0102 family.

This chain is UPF0102 protein HPAG1_0809, found in Helicobacter pylori (strain HPAG1).